We begin with the raw amino-acid sequence, 386 residues long: Copper-containing nitrite reductase (386 aa).

A signal peptide spans 1-18 (MKRQALAAIIASMFALAA). Cys19 carries N-palmitoyl cysteine lipidation. The S-diacylglycerol cysteine moiety is linked to residue Cys19. Plastocyanin-like domains are found at residues 97–191 (WTFD…ILVE) and 241–342 (GHVG…LKVE). His130, His135, His170, Cys171, His179, and Met184 together coordinate Cu cation. Residue His135 coordinates substrate. Residue His276 participates in substrate binding. His325 serves as a coordination point for Cu cation. Positions 363-386 (GAAPAASAPAASAPAASAPAKSDY) are disordered. Positions 364–386 (AAPAASAPAASAPAASAPAKSDY) are enriched in low complexity. 3 tandem repeats follow at residues 367 to 371 (AASAP), 372 to 376 (AASAP), and 377 to 381 (AASAP). The 3 X 5 AA tandem repeats of A-A-S-A-P stretch occupies residues 367-381 (AASAPAASAPAASAP).

This sequence belongs to the multicopper oxidase family. In terms of assembly, homotrimer. Requires Cu(+) as cofactor. Cu(2+) is required as a cofactor.

It localises to the cell outer membrane. The enzyme catalyses nitric oxide + Fe(III)-[cytochrome c] + H2O = Fe(II)-[cytochrome c] + nitrite + 2 H(+). Functionally, catalyzes the reduction of nitrite to nitric oxide (NO). It could be essential for growth and survival in oxygen-depleted environments. The chain is Copper-containing nitrite reductase (aniA) from Neisseria meningitidis serogroup A / serotype 4A (strain DSM 15465 / Z2491).